The following is a 314-amino-acid chain: Cathepsin L 1 (314 aa).

The N-terminal stretch at 1–24 is a signal peptide; sequence MMLLGASLYLNNTQEVSDEIDTAN. Positions 25–109 are cleaved as a propeptide — activation peptide; it reads LYANWKMKYN…NAANSNFQYK (85 aa). 3 disulfide bridges follow: Cys-132–Cys-175, Cys-166–Cys-207, and Cys-259–Cys-302. Residue Cys-135 is part of the active site. Active-site residues include His-265 and Asn-282.

This sequence belongs to the peptidase C1 family.

It localises to the secreted. It catalyses the reaction Specificity close to that of papain. As compared to cathepsin B, cathepsin L exhibits higher activity toward protein substrates, but has little activity on Z-Arg-Arg-NHMec, and no peptidyl-dipeptidase activity.. Its function is as follows. May be involved in extracellular digestion. This is Cathepsin L 1 from Paramecium tetraurelia.